Reading from the N-terminus, the 531-residue chain is Acetate CoA-transferase YdiF (531 aa).

Glutamate 333 serves as the catalytic 5-glutamyl coenzyme A thioester intermediate.

Belongs to the 3-oxoacid CoA-transferase family. Homotetramer; dimer of dimers.

The catalysed reaction is an acyl-CoA + acetate = a carboxylate + acetyl-CoA. In terms of biological role, coA transferase having broad substrate specificity for short-chain acyl-CoA thioesters with the activity decreasing when the length of the carboxylic acid chain exceeds four carbons. May play a role in short-chain fatty acid metabolism in E.coli. In Escherichia coli (strain K12), this protein is Acetate CoA-transferase YdiF (ydiF).